The following is an 87-amino-acid chain: ADLANGAKVFSGNCAACHMGGGNVVMANKTLKKEALEQFGMNSEDAIIYQVQHGKNAMPAFAGRLTDEQIQDVAAYVLDQAAKGWAG.

Heme c-binding residues include C14, C17, H18, and M58.

The protein belongs to the cytochrome c family. PetJ subfamily. Monomer. In terms of processing, binds 1 heme c group covalently per subunit.

The protein localises to the cellular thylakoid lumen. Functionally, functions as an electron carrier between membrane-bound cytochrome b6-f and photosystem I in oxygenic photosynthesis. The sequence is that of Cytochrome c6 (petJ) from Parathermosynechococcus lividus (Thermostichus lividus).